We begin with the raw amino-acid sequence, 358 residues long: UPF0324 membrane protein CT0845 (358 aa).

10 helical membrane-spanning segments follow: residues 36 to 53, 57 to 76, 83 to 105, 115 to 134, 146 to 168, 178 to 200, 244 to 261, 276 to 295, 307 to 325, and 335 to 357; these read YFPGVLASITVAAAATFL, YGAPTMLFALLIGMAFRFLS, LVGIQFASTTVLRIGVALLGMRI, VKPVVMVFFSVLLTILFGLA, GVLTGGSVGICGASAALAIAAVL, TIFTVISITALSTLAMIAYPVVA, LLRVSMLVPVVFILSLIF, LLPPFIIFFVLFVGINSLGV, VSRWCLVTAIGALGMKTSL, and PVSIMIAETVFLAVLVLGSVVWM.

The protein belongs to the UPF0324 family.

It is found in the cell membrane. The protein is UPF0324 membrane protein CT0845 of Chlorobaculum tepidum (strain ATCC 49652 / DSM 12025 / NBRC 103806 / TLS) (Chlorobium tepidum).